The sequence spans 956 residues: DNA ligase 4 (956 aa).

ATP contacts are provided by Glu-307, Lys-309, Ile-310, Arg-314, Glu-371, Phe-409, Glu-476, Lys-481, Lys-498, and Lys-500. Lys-309 acts as the N6-AMP-lysine intermediate in catalysis. Glu-371 is a binding site for Mg(2+). Glu-476 is a binding site for Mg(2+). The interval 666-700 (LEDRKRRNAGPGRGAKRLKLANVSSDEDELGTDER) is disordered. 2 consecutive BRCT domains span residues 700-793 (RPTS…PRNL) and 857-956 (PKGM…DYPL).

Belongs to the ATP-dependent DNA ligase family. Mg(2+) serves as cofactor.

The protein localises to the nucleus. It carries out the reaction ATP + (deoxyribonucleotide)n-3'-hydroxyl + 5'-phospho-(deoxyribonucleotide)m = (deoxyribonucleotide)n+m + AMP + diphosphate.. Functionally, DNA ligase involved in DNA non-homologous end joining (NHEJ); required for double-strand break (DSB) repair. The polypeptide is DNA ligase 4 (LIG4) (Yarrowia lipolytica (strain CLIB 122 / E 150) (Yeast)).